The chain runs to 134 residues: DNA-directed RNA polymerase subunit omega (134 aa).

Belongs to the RNA polymerase subunit omega family. As to quaternary structure, the RNAP catalytic core consists of 2 alpha, 1 beta, 1 beta' and 1 omega subunit. When a sigma factor is associated with the core the holoenzyme is formed, which can initiate transcription.

The catalysed reaction is RNA(n) + a ribonucleoside 5'-triphosphate = RNA(n+1) + diphosphate. Promotes RNA polymerase assembly. Latches the N- and C-terminal regions of the beta' subunit thereby facilitating its interaction with the beta and alpha subunits. The polypeptide is DNA-directed RNA polymerase subunit omega (Rhizobium johnstonii (strain DSM 114642 / LMG 32736 / 3841) (Rhizobium leguminosarum bv. viciae)).